Consider the following 293-residue polypeptide: Glycerophosphodiester phosphodiesterase (293 aa).

The signal sequence occupies residues Met1–Ala26. In terms of domain architecture, GP-PDE spans Ile38–Lys290. His43 acts as the Proton acceptor in catalysis. Sn-glycerol 3-phosphate-binding residues include His43, Arg44, and Glu70. Ca(2+)-binding residues include Glu70 and Asp72. Positions 85, 152, and 188 each coordinate sn-glycerol 3-phosphate. His85 serves as the catalytic Proton donor. Glu152 is a binding site for Ca(2+).

Belongs to the glycerophosphoryl diester phosphodiesterase family. It depends on Ca(2+) as a cofactor.

Its subcellular location is the secreted. The enzyme catalyses a sn-glycero-3-phosphodiester + H2O = an alcohol + sn-glycerol 3-phosphate + H(+). Glycerophosphodiester phosphodiesterase hydrolyzes glycerophosphodiesters into glycerol-3-phosphate (G3P) and the corresponding alcohol. Involved in wall teichoic acid (WTA) metabolism during phosphate starvation. Catalyzes the degradation of WTA, enabling the utilization of WTA as a phosphate reserve under limiting conditions. Is highly selective for the poly(gylcerol phosphate) WTA backbone and catalyzes exolytic cleavage of individual monomer units. In vitro is active toward the WTA oligomer mimics glycerophosphoglycerol (GPG) and bis-glycerophosphoglycerol (bGPG). This chain is Glycerophosphodiester phosphodiesterase, found in Bacillus subtilis (strain 168).